Here is a 1171-residue protein sequence, read N- to C-terminus: Kinesin-like protein GA13060 (1171 aa).

The disordered stretch occupies residues 1 to 24; the sequence is MASSISRNGGFCGALQRAPPPMPP. Residues 40 to 400 enclose the Kinesin motor domain; the sequence is KVKVMLRVSD…IQIASRIHRL (361 aa). Disordered stretches follow at residues 737–774, 798–820, 932–955, 1043–1099, and 1124–1143; these read LLGQDMSLPPDGDEDQDSGPSEVPPALPLFDDPLGSRD, LVASRASSSHHQHQHHRPSSQRS, PAYRLTPSPPKQPSHSPSQGSLPS, TSSE…QRHR, and RHSHGVGGHKKHRHRHEGNG. Basic residues predominate over residues 805–816; sequence SSHHQHQHHRPS. Residues 1043 to 1059 show a composition bias toward polar residues; that stretch reads TSSEAYDSGHDSNSTPR. The segment covering 1124–1139 has biased composition (basic residues); that stretch reads RHSHGVGGHKKHRHRH.

This sequence belongs to the TRAFAC class myosin-kinesin ATPase superfamily. Kinesin family. KIF26 subfamily.

It is found in the cytoplasm. The protein localises to the cytoskeleton. The polypeptide is Kinesin-like protein GA13060 (Drosophila pseudoobscura pseudoobscura (Fruit fly)).